Here is a 323-residue protein sequence, read N- to C-terminus: Mitochondrial glutamate carrier 1 (323 aa).

3 Solcar repeats span residues 6 to 93, 101 to 214, and 223 to 312; these read ISLP…FRHQ, LTLP…LNQL, and SPFY…GIAE. 6 helical membrane-spanning segments follow: residues 12-32, 62-82, 107-127, 189-209, 223-243, and 292-312; these read LINGGIAGLIGVTCVFPIDLA, YFGMYRGAAVNLTLVTPEKAI, MLAGCGAGTCQVIVTTPMEML, GLGATLLRDVPFSIVYFPLFA, SPFYVSFLAGCVAGSAAAVAV, and ALVIAPLFGIAQVVYFLGIAE.

Belongs to the mitochondrial carrier (TC 2.A.29) family. In terms of tissue distribution, detected in insulin-secreting beta-cells and pancreatic islets (at the protein level).

It localises to the mitochondrion inner membrane. It carries out the reaction L-glutamate(in) + H(+)(in) = L-glutamate(out) + H(+)(out). Functionally, mitochondrial glutamate/H(+) symporter. Responsible for the transport of glutamate from the cytosol into the mitochondrial matrix with the concomitant import of a proton. Plays a role in the control of glucose-stimulated insulin secretion. This is Mitochondrial glutamate carrier 1 from Rattus norvegicus (Rat).